The chain runs to 366 residues: Chorismate synthase (366 aa).

NADP(+)-binding residues include Arg-48 and Arg-54. FMN contacts are provided by residues 125-127 (RSS), 238-239 (NA), Gly-278, 293-297 (KPTSS), and Arg-319.

The protein belongs to the chorismate synthase family. In terms of assembly, homotetramer. The cofactor is FMNH2.

It carries out the reaction 5-O-(1-carboxyvinyl)-3-phosphoshikimate = chorismate + phosphate. It functions in the pathway metabolic intermediate biosynthesis; chorismate biosynthesis; chorismate from D-erythrose 4-phosphate and phosphoenolpyruvate: step 7/7. Functionally, catalyzes the anti-1,4-elimination of the C-3 phosphate and the C-6 proR hydrogen from 5-enolpyruvylshikimate-3-phosphate (EPSP) to yield chorismate, which is the branch point compound that serves as the starting substrate for the three terminal pathways of aromatic amino acid biosynthesis. This reaction introduces a second double bond into the aromatic ring system. This is Chorismate synthase from Ralstonia pickettii (strain 12J).